The primary structure comprises 993 residues: DNA-binding protein SMUBP-2 (993 aa).

Residue Ala-2 is modified to N-acetylalanine. ATP-binding positions include 213 to 220, Gln-402, Tyr-441, and Glu-570; that span reads GPPGTGKT. The interval 637–783 is SS DNA-binding; it reads TAFEYLDDIV…KARHITVSRR (147 aa). Disordered regions lie at residues 650-723, 765-815, and 837-872; these read YTHE…GPDR, LRHD…EPVT, and RQQSSQAQTAKGQPGGDSRPQKASQKKKKKEPKGPV. Composition is skewed to polar residues over residues 667 to 683 and 703 to 716; these read PSTSIRKPASDQESGQE and HVQSQHSSSANGSD. Residues 721 to 784 enclose the R3H domain; the sequence is PDRTEHFRAT…ARHITVSRRS (64 aa). Residues 765–775 show a composition bias toward basic and acidic residues; sequence LRHDSTGEGKA. A compositionally biased stretch (low complexity) spans 784-794; that stretch reads SPASSGSVAPQ. 2 positions are modified to phosphoserine: Ser-797 and Ser-800. Polar residues predominate over residues 837–847; it reads RQQSSQAQTAK. The short motif at 862–866 is the Nuclear localization signal element; it reads KKKKK. The AN1-type; degenerate zinc finger occupies 889–938; sequence VKADNTCSFSKCSVSTTTLGQFCMHCSHRYYLSHHLPEIHGCGEKARAHA. Zn(2+) contacts are provided by Cys-911, Cys-914, His-928, and Cys-930. Residues 953–993 are disordered; it reads GTKDRALDPAKRAQLQRRLDKKLGELSSQRTSRKKEKERGT. Basic and acidic residues predominate over residues 954-976; sequence TKDRALDPAKRAQLQRRLDKKLG.

It belongs to the DNA2/NAM7 helicase family. Homooligomer. Interacts with RUVBL1. Interacts with RUVBL2. Interacts with GTF3C1. Interacts with ABT1. Interacts with ribosomes. In terms of tissue distribution, in all tissues examined.

It localises to the nucleus. The protein localises to the cytoplasm. Its subcellular location is the cell projection. The protein resides in the axon. It catalyses the reaction ATP + H2O = ADP + phosphate + H(+). In terms of biological role, 5' to 3' helicase that unwinds RNA and DNA duplexes in an ATP-dependent reaction. Specific to 5'-phosphorylated single-stranded guanine-rich sequences. May play a role in RNA metabolism, ribosome biogenesis or initiation of translation. May play a role in regulation of transcription. Interacts with tRNA-Tyr. The sequence is that of DNA-binding protein SMUBP-2 (Ighmbp2) from Mus musculus (Mouse).